Here is a 247-residue protein sequence, read N- to C-terminus: MEYQSSVENLDEDGYTQLDFSSRNITRRSVVSEKGLCAASSHWRLIAVTLGILCSVMLVITVVLSTSGIWRSSSGNNLLKSDSFPSRNKDNQSQPTQSSLEDSVIPTKALTTTGVFSSSCPPNWITHEDSCYLFSTLLDSWDGSKRQCFQLGSHLLKIDSSKELEFISRQVSSQPDHSFWIGLSRRQTEEPWLWEDGSTLLSNLFQIRSTVTEKDSSHNCAWIHVSDIYDQLCSVHSYSICEKKLSV.

At 1–44 (MEYQSSVENLDEDGYTQLDFSSRNITRRSVVSEKGLCAASSHWR) the chain is on the cytoplasmic side. Residues 15–18 (YTQL) carry the ITAM-like motif. Residues 45–65 (LIAVTLGILCSVMLVITVVLS) form a helical; Signal-anchor for type II membrane protein membrane-spanning segment. Residues 66–247 (TSGIWRSSSG…YSICEKKLSV (182 aa)) lie on the Extracellular side of the membrane. Over residues 81–101 (SDSFPSRNKDNQSQPTQSSLE) the composition is skewed to polar residues. The segment at 81 to 103 (SDSFPSRNKDNQSQPTQSSLEDS) is disordered. N-linked (GlcNAc...) asparagine glycosylation is present at N91. Disulfide bonds link C120/C131, C148/C241, and C220/C233. The C-type lectin domain maps to 127–242 (HEDSCYLFST…CSVHSYSICE (116 aa)). 146-153 (RQCFQLGS) serves as a coordination point for (1,3-beta-D-glucosyl)n. 3 residues coordinate a divalent metal cation: K157, D159, and E163. E195 provides a ligand contact to (1,3-beta-D-glucosyl)n. A divalent metal cation is bound at residue E242.

Homodimer. Interacts with SYK; participates in leukocyte activation in presence of fungal pathogens. Interacts with CD37; this interaction controls CLEC7A-mediated IL-6 production. In terms of processing, phosphorylated on tyrosine residues in response to beta-glucan binding. In terms of tissue distribution, detected in bone marrow, monocytes, macrophages, dendritic cells and natural killer cells.

It localises to the cell membrane. Lectin that functions as a pattern recognizing receptor (PRR) specific for beta-1,3-linked and beta-1,6-linked glucans, which constitute cell wall constituents from pathogenic bacteria and fungi. Necessary for the TLR2-mediated inflammatory response and activation of NF-kappa-B: upon beta-glucan binding, recruits SYK via its ITAM motif and promotes a signaling cascade that activates some CARD domain-BCL10-MALT1 (CBM) signalosomes, leading to the activation of NF-kappa-B and MAP kinase p38 (MAPK11, MAPK12, MAPK13 and/or MAPK14) pathways which stimulate expression of genes encoding pro-inflammatory cytokines and chemokines. Enhances cytokine production in macrophages and dendritic cells. Mediates production of reactive oxygen species in the cell. Mediates phagocytosis of C.albicans conidia. Binds T-cells in a way that does not involve their surface glycans and plays a role in T-cell activation. Stimulates T-cell proliferation. Induces phosphorylation of SCIMP after binding beta-glucans. This Bos taurus (Bovine) protein is C-type lectin domain family 7 member A (CLEC7A).